Consider the following 373-residue polypeptide: Chaperone protein DnaJ (373 aa).

The 65-residue stretch at 5-69 (DYYEVLGVNK…NKRVNYDQFG (65 aa)) folds into the J domain. The segment at 130 to 212 (GTKKEISIKK…CKGKGTENKT (83 aa)) adopts a CR-type zinc-finger fold. Residues cysteine 143, cysteine 146, cysteine 160, cysteine 163, cysteine 186, cysteine 189, cysteine 200, and cysteine 203 each coordinate Zn(2+). 4 CXXCXGXG motif repeats span residues 143–150 (CHTCNGDG), 160–167 (CSYCNGAG), 186–193 (CPKCEGSG), and 200–207 (CPTCKGKG).

The protein belongs to the DnaJ family. As to quaternary structure, homodimer. Zn(2+) is required as a cofactor.

The protein resides in the cytoplasm. Participates actively in the response to hyperosmotic and heat shock by preventing the aggregation of stress-denatured proteins and by disaggregating proteins, also in an autonomous, DnaK-independent fashion. Unfolded proteins bind initially to DnaJ; upon interaction with the DnaJ-bound protein, DnaK hydrolyzes its bound ATP, resulting in the formation of a stable complex. GrpE releases ADP from DnaK; ATP binding to DnaK triggers the release of the substrate protein, thus completing the reaction cycle. Several rounds of ATP-dependent interactions between DnaJ, DnaK and GrpE are required for fully efficient folding. Also involved, together with DnaK and GrpE, in the DNA replication of plasmids through activation of initiation proteins. The sequence is that of Chaperone protein DnaJ from Staphylococcus epidermidis (strain ATCC 35984 / DSM 28319 / BCRC 17069 / CCUG 31568 / BM 3577 / RP62A).